The chain runs to 83 residues: MNPLIAASSVIAAGLAIGLAAIGPGVGQGTVAGNAVEGIARQPEAEGKIRGTLLLSFAFMESLTIYGLVVALALLFANPFVGA.

2 helical membrane-spanning segments follow: residues 3 to 23 (PLIA…AAIG) and 57 to 77 (FAFM…LLFA).

The protein belongs to the ATPase C chain family. As to quaternary structure, F-type ATPases have 2 components, F(1) - the catalytic core - and F(0) - the membrane proton channel. F(1) has five subunits: alpha(3), beta(3), gamma(1), delta(1), epsilon(1). F(0) has four main subunits: a(1), b(1), b'(1) and c(10-14). The alpha and beta chains form an alternating ring which encloses part of the gamma chain. F(1) is attached to F(0) by a central stalk formed by the gamma and epsilon chains, while a peripheral stalk is formed by the delta, b and b' chains.

It localises to the plastid. It is found in the chloroplast thylakoid membrane. Functionally, f(1)F(0) ATP synthase produces ATP from ADP in the presence of a proton or sodium gradient. F-type ATPases consist of two structural domains, F(1) containing the extramembraneous catalytic core and F(0) containing the membrane proton channel, linked together by a central stalk and a peripheral stalk. During catalysis, ATP synthesis in the catalytic domain of F(1) is coupled via a rotary mechanism of the central stalk subunits to proton translocation. Its function is as follows. Key component of the F(0) channel; it plays a direct role in translocation across the membrane. A homomeric c-ring of between 10-14 subunits forms the central stalk rotor element with the F(1) delta and epsilon subunits. The sequence is that of ATP synthase subunit c, chloroplastic from Oedogonium cardiacum (Filamentous green alga).